A 128-amino-acid chain; its full sequence is Early 3 14.7 kDa protein (128 aa).

This sequence belongs to the adenoviridae E3_15 family. In terms of assembly, may bind to host IKBKG, OPTN and RRAGA.

The protein resides in the host cytoplasm. The protein localises to the host nucleus. Functionally, may prevent Nf-kappaB activation by immune signals like Tumor necrosis factor, presumably by inhibiting NFKB1 dimer DNA-binding. May act directly at the TNF receptor to inhibit signaling. The polypeptide is Early 3 14.7 kDa protein (Human adenovirus C serotype 2 (HAdV-2)).